The primary structure comprises 339 residues: 3-isopropylmalate dehydrogenase (339 aa).

Residues Arg88, Arg98, Arg122, and Asp212 each contribute to the substrate site. Mg(2+) contacts are provided by Asp212, Asp236, and Asp240. 272-284 (GSAPDIAGKGIAD) is an NAD(+) binding site.

It belongs to the isocitrate and isopropylmalate dehydrogenases family. LeuB type 2 subfamily. In terms of assembly, homodimer. It depends on Mg(2+) as a cofactor. Requires Mn(2+) as cofactor.

The protein resides in the cytoplasm. The enzyme catalyses (2R,3S)-3-isopropylmalate + NAD(+) = 4-methyl-2-oxopentanoate + CO2 + NADH. Its pathway is amino-acid biosynthesis; L-leucine biosynthesis; L-leucine from 3-methyl-2-oxobutanoate: step 3/4. Catalyzes the oxidation of 3-carboxy-2-hydroxy-4-methylpentanoate (3-isopropylmalate) to 3-carboxy-4-methyl-2-oxopentanoate. The product decarboxylates to 4-methyl-2 oxopentanoate. In Corynebacterium aurimucosum (strain ATCC 700975 / DSM 44827 / CIP 107346 / CN-1) (Corynebacterium nigricans), this protein is 3-isopropylmalate dehydrogenase.